The following is a 149-amino-acid chain: Protein cornichon homolog 2 (149 aa).

3 helical membrane-spanning segments follow: residues 3-23 (IELI…GLTA), 59-79 (ALCA…MAPV), and 117-137 (YFSL…TLFI).

It belongs to the cornichon family.

It is found in the endoplasmic reticulum membrane. It localises to the golgi apparatus membrane. Its function is as follows. Acts as a cargo receptor necessary for the transportation of secretory proteins from the endoplasmic reticulum (ER) in COPII-coated vesicles targeted to the Golgi apparatus. The protein is Protein cornichon homolog 2 of Oryza sativa subsp. japonica (Rice).